The primary structure comprises 505 residues: 2-isopropylmalate synthase (505 aa).

Residues 5–269 (IKIFDTTLRD…ETGIHTEYLY (265 aa)) form the Pyruvate carboxyltransferase domain. Positions 14, 204, 206, and 240 each coordinate Mn(2+). The tract at residues 393–505 (SLLYFHTFTG…AVNRFELRKR (113 aa)) is regulatory domain.

Belongs to the alpha-IPM synthase/homocitrate synthase family. LeuA type 1 subfamily. Homodimer. The cofactor is Mn(2+).

It is found in the cytoplasm. The enzyme catalyses 3-methyl-2-oxobutanoate + acetyl-CoA + H2O = (2S)-2-isopropylmalate + CoA + H(+). Its pathway is amino-acid biosynthesis; L-leucine biosynthesis; L-leucine from 3-methyl-2-oxobutanoate: step 1/4. Catalyzes the condensation of the acetyl group of acetyl-CoA with 3-methyl-2-oxobutanoate (2-ketoisovalerate) to form 3-carboxy-3-hydroxy-4-methylpentanoate (2-isopropylmalate). The chain is 2-isopropylmalate synthase from Sediminispirochaeta smaragdinae (strain DSM 11293 / JCM 15392 / SEBR 4228) (Spirochaeta smaragdinae).